The sequence spans 325 residues: Fructose-1,6-bisphosphatase class 1 (325 aa).

The Mg(2+) site is built by glutamate 84, aspartate 103, leucine 105, and aspartate 106. Residues 106 to 109 (DGSS), asparagine 196, and lysine 262 contribute to the substrate site. Glutamate 268 contributes to the Mg(2+) binding site.

This sequence belongs to the FBPase class 1 family. In terms of assembly, homotetramer. The cofactor is Mg(2+).

The protein resides in the cytoplasm. It catalyses the reaction beta-D-fructose 1,6-bisphosphate + H2O = beta-D-fructose 6-phosphate + phosphate. It functions in the pathway carbohydrate biosynthesis; gluconeogenesis. The sequence is that of Fructose-1,6-bisphosphatase class 1 from Shewanella baltica (strain OS195).